The following is a 258-amino-acid chain: MLIVVSPAKTLDYESPLATEKFTQPELIEYSKELIDVCRKLTPADVASLMKVSDKIADLNVGRFQEWSETFTTENSRQAILAFKGDVYTGLEAETLSDADFEYAQKHLRMLSGLYGLLKPLDLMQPYRLEMGTKLANDKGSNLYQFWGNVITDKLNEAIAEQGDNVLINLASNEYFKAVKPKNLDAQVITPIFKDCKNGQYKVISFYAKKARGMMARYIIENRIESVADLTKFDTAGYYFVEEESTPTDLVFKREEQN.

The protein belongs to the UPF0246 family.

This is UPF0246 protein VP0504 from Vibrio parahaemolyticus serotype O3:K6 (strain RIMD 2210633).